Consider the following 137-residue polypeptide: DNA polymerase III subunit psi (137 aa).

This sequence belongs to the DNA polymerase III psi/HolD chain family. As to quaternary structure, the DNA polymerase III holoenzyme complex contains at least 10 different subunits organized into 3 functionally essential subassemblies: the Pol III core, the beta sliding clamp processivity factor and the clamp-loading complex. The Pol III core (subunits alpha, epsilon and theta) contains the polymerase and the 3'-5' exonuclease proofreading activities. The polymerase is tethered to the template via the dimeric beta sliding clamp processivity factor. The clamp-loading complex (also called gamma complex) assembles the beta sliding clamp onto the primed template and plays a central role in the organization and communication at the replication fork. The clamp-loading complex contains delta, delta', psi and chi, and 3 copies of either or both of two different DnaX proteins, gamma and tau. The DNA replisome complex has a single clamp loader (3 tau and 1 each of delta, delta', psi and chi subunits) which binds 3 Pol III cores (1 core on the leading strand and 2 on the lagging strand) each with a beta sliding clamp dimer. Additional proteins in the replisome are other copies of gamma, psi (this protein) and chi (holC), SSB, DNA helicase and RNA primase. The clamp loader hydrolyzes ATP to assemble the beta processivity factor onto the primed template and plays a central role in the organization and communication at the replication fork. Interacts directly with the chi subunit (holC).

It carries out the reaction DNA(n) + a 2'-deoxyribonucleoside 5'-triphosphate = DNA(n+1) + diphosphate. Its function is as follows. Part of the beta sliding clamp loading complex, which hydrolyzes ATP to load the beta clamp onto primed DNA to form the DNA replication pre-initiation complex. DNA polymerase III is a complex, multichain enzyme responsible for most of the replicative synthesis in bacteria. This DNA polymerase also exhibits 3' to 5' exonuclease activity. The protein is DNA polymerase III subunit psi of Escherichia coli (strain K12).